A 351-amino-acid polypeptide reads, in one-letter code: Nicotinate-nucleotide--dimethylbenzimidazole phosphoribosyltransferase (351 aa).

The Proton acceptor role is filled by E317.

This sequence belongs to the CobT family.

The enzyme catalyses 5,6-dimethylbenzimidazole + nicotinate beta-D-ribonucleotide = alpha-ribazole 5'-phosphate + nicotinate + H(+). It participates in nucleoside biosynthesis; alpha-ribazole biosynthesis; alpha-ribazole from 5,6-dimethylbenzimidazole: step 1/2. Functionally, catalyzes the synthesis of alpha-ribazole-5'-phosphate from nicotinate mononucleotide (NAMN) and 5,6-dimethylbenzimidazole (DMB). This Pseudomonas fluorescens (strain ATCC BAA-477 / NRRL B-23932 / Pf-5) protein is Nicotinate-nucleotide--dimethylbenzimidazole phosphoribosyltransferase.